Consider the following 543-residue polypeptide: Carboxypeptidase Y homolog A (543 aa).

An N-terminal signal peptide occupies residues 1–17 (MKFLTTGLLATAALAAA). Positions 18-124 (QEQQVLQAED…KLHNYDLRVK (107 aa)) are excised as a propeptide. 5 disulfide bridges follow: Cys-179–Cys-419, Cys-313–Cys-327, Cys-337–Cys-360, Cys-344–Cys-353, and Cys-382–Cys-389. A glycan (N-linked (GlcNAc...) asparagine) is linked at Asn-210. Residue Ser-266 is part of the active site. Asp-458 is an active-site residue. N-linked (GlcNAc...) asparagine glycosylation occurs at Asn-509. The active site involves His-520.

This sequence belongs to the peptidase S10 family.

Its subcellular location is the vacuole. The catalysed reaction is Release of a C-terminal amino acid with broad specificity.. Vacuolar carboxypeptidase involved in degradation of small peptides. Digests preferentially peptides containing an aliphatic or hydrophobic residue in P1' position, as well as methionine, leucine or phenylalanine in P1 position of ester substrate. The sequence is that of Carboxypeptidase Y homolog A (CPYA) from Trichophyton tonsurans (Scalp ringworm fungus).